The sequence spans 97 residues: Insertion element IS2 uncharacterized 11.1 kDa protein (97 aa).

This chain is Insertion element IS2 uncharacterized 11.1 kDa protein, found in Escherichia coli.